We begin with the raw amino-acid sequence, 414 residues long: Light-independent protochlorophyllide reductase subunit N (414 aa).

The [4Fe-4S] cluster site is built by C16, C41, and C98.

It belongs to the BchN/ChlN family. As to quaternary structure, protochlorophyllide reductase is composed of three subunits; BchL, BchN and BchB. Forms a heterotetramer of two BchB and two BchN subunits. [4Fe-4S] cluster is required as a cofactor.

The enzyme catalyses chlorophyllide a + oxidized 2[4Fe-4S]-[ferredoxin] + 2 ADP + 2 phosphate = protochlorophyllide a + reduced 2[4Fe-4S]-[ferredoxin] + 2 ATP + 2 H2O. It participates in porphyrin-containing compound metabolism; bacteriochlorophyll biosynthesis (light-independent). In terms of biological role, component of the dark-operative protochlorophyllide reductase (DPOR) that uses Mg-ATP and reduced ferredoxin to reduce ring D of protochlorophyllide (Pchlide) to form chlorophyllide a (Chlide). This reaction is light-independent. The NB-protein (BchN-BchB) is the catalytic component of the complex. This is Light-independent protochlorophyllide reductase subunit N from Roseiflexus castenholzii (strain DSM 13941 / HLO8).